We begin with the raw amino-acid sequence, 97 residues long: Small ribosomal subunit protein bS20 (97 aa).

Basic residues predominate over residues 76 to 85 (RNNGARKKAG). Positions 76-97 (RNNGARKKAGLAKALQKVSQAS) are disordered. Positions 86 to 97 (LAKALQKVSQAS) are enriched in low complexity.

Belongs to the bacterial ribosomal protein bS20 family.

In terms of biological role, binds directly to 16S ribosomal RNA. In Microcystis aeruginosa (strain NIES-843 / IAM M-2473), this protein is Small ribosomal subunit protein bS20.